The primary structure comprises 262 residues: tRNA pseudouridine synthase A (262 aa).

Asp52 functions as the Nucleophile in the catalytic mechanism. Tyr110 lines the substrate pocket.

This sequence belongs to the tRNA pseudouridine synthase TruA family. In terms of assembly, homodimer.

The catalysed reaction is uridine(38/39/40) in tRNA = pseudouridine(38/39/40) in tRNA. Formation of pseudouridine at positions 38, 39 and 40 in the anticodon stem and loop of transfer RNAs. This is tRNA pseudouridine synthase A from Chromobacterium violaceum (strain ATCC 12472 / DSM 30191 / JCM 1249 / CCUG 213 / NBRC 12614 / NCIMB 9131 / NCTC 9757 / MK).